The sequence spans 63 residues: U2-agatoxin-Ao1v (63 aa).

An N-terminal signal peptide occupies residues 1-14; it reads LLLISAMVGSMIAA. Positions 15–28 are excised as a propeptide; that stretch reads VPEEESLQLSEDER. Cystine bridges form between cysteine 31-cysteine 47, cysteine 38-cysteine 52, and cysteine 46-cysteine 62.

It belongs to the neurotoxin 01 (U2-agtx) family. In terms of tissue distribution, expressed by the venom gland.

Its subcellular location is the secreted. In terms of biological role, insect active toxin causing rapid but reversible paralysis in crickets. No activity shown in mammals. Does not show effect on mammalian voltage-gated calcium channels. In Agelena orientalis (Funnel-web spider), this protein is U2-agatoxin-Ao1v.